A 77-amino-acid chain; its full sequence is uncharacterized protein (77 aa).

This is an uncharacterized protein from Acidianus hospitalis (AFV-1).